The primary structure comprises 123 residues: Polyadenylate-binding protein-interacting protein 2B (123 aa).

M1 is modified (N-acetylmethionine). Residues 1–13 (MNGSNMANTSPSV) are compositionally biased toward polar residues. 2 disordered regions span residues 1 to 30 (MNGSNMANTSPSVKSKEDQGLSGHDEKENP) and 91 to 123 (NGLSVSEGHDSEDILSKSNLNPDAKEFIPGEKY). Composition is skewed to basic and acidic residues over residues 14–30 (KSKEDQGLSGHDEKENP) and 113–123 (DAKEFIPGEKY).

This sequence belongs to the PAIP2 family. As to quaternary structure, interacts (via central acidic portion and C-terminus) with PABPC1 (via the second and third RRM domains and the C-terminus). In terms of processing, ubiquitinated in vitro. In terms of tissue distribution, expressed in brain, cervix, heart, liver, ovary, kidney, prostate and testis.

Functionally, inhibits translation of capped and polyadenylated mRNAs by displacing PABPC1 from the poly(A) tail. This Homo sapiens (Human) protein is Polyadenylate-binding protein-interacting protein 2B (PAIP2B).